Reading from the N-terminus, the 283-residue chain is Elongation factor Ts (283 aa).

Residues 80–83 (TDFV) are involved in Mg(2+) ion dislocation from EF-Tu.

The protein belongs to the EF-Ts family.

The protein resides in the cytoplasm. Functionally, associates with the EF-Tu.GDP complex and induces the exchange of GDP to GTP. It remains bound to the aminoacyl-tRNA.EF-Tu.GTP complex up to the GTP hydrolysis stage on the ribosome. This chain is Elongation factor Ts, found in Shigella boydii serotype 18 (strain CDC 3083-94 / BS512).